Reading from the N-terminus, the 485-residue chain is Peroxisomal catalase (485 aa).

Active-site residues include histidine 53 and asparagine 126. Tyrosine 336 is a heme binding site.

Belongs to the catalase family. In terms of assembly, homotetramer. It depends on heme as a cofactor.

It is found in the peroxisome matrix. It catalyses the reaction 2 H2O2 = O2 + 2 H2O. Its function is as follows. Catalyzes the degradation of hydrogen peroxide (H(2)O(2)) generated by peroxisomal oxidases to water and oxygen, thereby protecting cells from the toxic effects of hydrogen peroxide. This chain is Peroxisomal catalase (POX9), found in Candida tropicalis (Yeast).